The primary structure comprises 971 residues: Exportin-2 (971 aa).

The Importin N-terminal domain maps to 29–102; the sequence is AEKYLESVEG…KSSIINLMLR (74 aa).

It belongs to the XPO2/CSE1 family.

Its subcellular location is the cytoplasm. The protein resides in the nucleus. Its function is as follows. Export receptor for importin alpha. Mediates importin-alpha re-export from the nucleus to the cytoplasm after import substrates have been released into the nucleoplasm. The chain is Exportin-2 (cse1l) from Xenopus laevis (African clawed frog).